We begin with the raw amino-acid sequence, 366 residues long: Protein RecA (366 aa).

81 to 88 (GPESSGKT) is a binding site for ATP.

This sequence belongs to the RecA family.

It localises to the cytoplasm. Its function is as follows. Can catalyze the hydrolysis of ATP in the presence of single-stranded DNA, the ATP-dependent uptake of single-stranded DNA by duplex DNA, and the ATP-dependent hybridization of homologous single-stranded DNAs. It interacts with LexA causing its activation and leading to its autocatalytic cleavage. This chain is Protein RecA, found in Leptospira interrogans serogroup Icterohaemorrhagiae serovar copenhageni (strain Fiocruz L1-130).